An 86-amino-acid chain; its full sequence is Omega-theraphotoxin-Hhn1f 2 (86 aa).

An N-terminal signal peptide occupies residues 1-21 (MKSIVFVALFGLALLAVVCSA). A propeptide spanning residues 22–50 (SEDAHKELLKEVVRAVVVDKTDAVQAEER) is cleaved from the precursor. Cystine bridges form between cysteine 52–cysteine 66, cysteine 59–cysteine 71, and cysteine 65–cysteine 78.

Belongs to the neurotoxin 10 (Hwtx-1) family. 17 (Hntx-9) subfamily. Expressed by the venom gland.

It is found in the secreted. Functionally, ion channel inhibitor. The sequence is that of Omega-theraphotoxin-Hhn1f 2 from Cyriopagopus hainanus (Chinese bird spider).